The sequence spans 167 residues: Transmembrane protein 220 (167 aa).

5 consecutive transmembrane segments (helical) span residues 10-30 (PGLW…AAVV), 40-60 (WVVV…NPLV), 69-89 (VSAI…YHFL), 104-122 (ELSG…HSSS), and 130-150 (MHLA…VYVH).

It is found in the membrane. The polypeptide is Transmembrane protein 220 (Tmem220) (Mus musculus (Mouse)).